A 197-amino-acid polypeptide reads, in one-letter code: Molybdenum cofactor guanylyltransferase (197 aa).

GTP-binding positions include 10-12, Lys-23, Asn-51, Asp-69, and Asp-99; that span reads LAG. Position 99 (Asp-99) interacts with Mg(2+).

It belongs to the MobA family. As to quaternary structure, monomer. Mg(2+) serves as cofactor.

It is found in the cytoplasm. It carries out the reaction Mo-molybdopterin + GTP + H(+) = Mo-molybdopterin guanine dinucleotide + diphosphate. In terms of biological role, transfers a GMP moiety from GTP to Mo-molybdopterin (Mo-MPT) cofactor (Moco or molybdenum cofactor) to form Mo-molybdopterin guanine dinucleotide (Mo-MGD) cofactor. The chain is Molybdenum cofactor guanylyltransferase from Shewanella sp. (strain ANA-3).